Consider the following 847-residue polypeptide: Bifunctional protein argC, mitochondrial (847 aa).

The interval 100-331 is acetylglutamate kinase; sequence QIVLVKIGGG…PPSTSITITS (232 aa). Positions 352 to 508 constitute an N-acetyltransferase domain; the sequence is GEVMHSHESP…CLSQSSTYLS (157 aa). The tract at residues 531–846 is N-acetyl-gamma-glutamyl-phosphate reductase; it reads FRVGLIGARG…LDELASIKNE (316 aa). The active site involves Cys665.

This sequence in the N-terminal section; belongs to the acetylglutamate kinase family. In the C-terminal section; belongs to the NAGSA dehydrogenase family.

Its subcellular location is the mitochondrion. The catalysed reaction is N-acetyl-L-glutamate 5-semialdehyde + phosphate + NADP(+) = N-acetyl-L-glutamyl 5-phosphate + NADPH + H(+). It catalyses the reaction N-acetyl-L-glutamate + ATP = N-acetyl-L-glutamyl 5-phosphate + ADP. It participates in amino-acid biosynthesis; L-arginine biosynthesis; N(2)-acetyl-L-ornithine from L-glutamate: step 2/4. It functions in the pathway amino-acid biosynthesis; L-arginine biosynthesis; N(2)-acetyl-L-ornithine from L-glutamate: step 3/4. The polypeptide is Bifunctional protein argC, mitochondrial (argC) (Dictyostelium discoideum (Social amoeba)).